Reading from the N-terminus, the 181-residue chain is Vacuolar ATPase assembly protein VMA22 (181 aa).

Ser-2 carries the post-translational modification N-acetylalanine. Composition is skewed to basic and acidic residues over residues 93 to 107 (AQDK…DNKL) and 114 to 125 (TKPEKQKTQSHK). The disordered stretch occupies residues 93–125 (AQDKQEKKEEEDNKLTQRKKGTKPEKQKTQSHK).

Required for V-ATPase activity. The protein is Vacuolar ATPase assembly protein VMA22 (VMA22) of Saccharomyces cerevisiae (strain ATCC 204508 / S288c) (Baker's yeast).